We begin with the raw amino-acid sequence, 62 residues long: UPF0337 protein mll8179 (62 aa).

Residues 1–42 (MRNMVNKDQVAGLAKQLKGSVKQAAGKATGNRRTQAEGMADK) are disordered.

The protein belongs to the UPF0337 (CsbD) family.

The polypeptide is UPF0337 protein mll8179 (Mesorhizobium japonicum (strain LMG 29417 / CECT 9101 / MAFF 303099) (Mesorhizobium loti (strain MAFF 303099))).